The following is a 356-amino-acid chain: NADH-quinone oxidoreductase subunit H (356 aa).

9 helical membrane passes run 17 to 37 (TGGILLVVIWVLLSLAFLLLA), 51 to 71 (PNVVGPFGLLQSFADFFKFVL), 83 to 103 (VVFILAPLISLILAFVGWAVV), 116 to 136 (VGILYLLAMSSLGVYGIIMGG), 162 to 182 (IGLIIITVILLAGSMNLSTIV), 202 to 222 (LVLLPVMVVAMGMFYISALAE), 261 to 281 (IVLMCAMISVLFFGGWNPGFP), 295 to 315 (LFLALVFYAKICFWFFMFAMA), and 334 to 354 (VFLPTSLVLVAAVAAWRVFGP).

Belongs to the complex I subunit 1 family. In terms of assembly, NDH-1 is composed of 14 different subunits. Subunits NuoA, H, J, K, L, M, N constitute the membrane sector of the complex.

It localises to the cell inner membrane. It carries out the reaction a quinone + NADH + 5 H(+)(in) = a quinol + NAD(+) + 4 H(+)(out). Its function is as follows. NDH-1 shuttles electrons from NADH, via FMN and iron-sulfur (Fe-S) centers, to quinones in the respiratory chain. The immediate electron acceptor for the enzyme in this species is believed to be ubiquinone. Couples the redox reaction to proton translocation (for every two electrons transferred, four hydrogen ions are translocated across the cytoplasmic membrane), and thus conserves the redox energy in a proton gradient. This subunit may bind ubiquinone. The sequence is that of NADH-quinone oxidoreductase subunit H from Caulobacter vibrioides (strain ATCC 19089 / CIP 103742 / CB 15) (Caulobacter crescentus).